The following is a 627-amino-acid chain: MDLISVLPSTSKSCVCLHKPLSSSTHKLKPFCRTIRILGMPRPRKSVLMASSMSMSVNTLVSDDDIQRRTGGYHSNLWNDDVIQFLSTPYGELAYRERGERLIDEVREIFSSMSLEDGEFSDLIQRLWMVDNVERLGIDRHFKNEIKSALDYVYSYWSEKGIGCGTKSIITNLNSTALGFRTLRLHGYPVSADVLKHFRNQIGQFVSCPSETEEDIRSIVNLYRASLIAFPGEKVMEEAERFSEKYLKETLQKIPDCSLSREIGDVLEHGWHTNLPRLEARNYIDVFGQDTKNMESNRKTEKLLELAKLEFNIFQSIQKTELESLLRWWNDSGSPQITFTRHRHVEYYTLASCIAFEPQHSGFRLGFAKACHIITVLDDMYDLFGTVDELKLFTAAIKRWDPSATDCLPQYMKGIYMMVYNTVNEMSAEAQKAQGRDTLNYARQAWEVYLDSYMQEAKWIATGYLPTFEEYLENGKVSSGHRVSALQPMLTMDIPFPPHILKEVDFPSNLNDLACAILRLRGDTRCYQEDRARGEETSCISCYMKDNPGATEEDALNHLNVMISGVIKGLNWELLKPDSGVPISSKKINFDITRAFHYGYKYRDGYSVSSVETKSLVMRTLLEPVPL.

The transit peptide at 1 to 50 directs the protein to the chloroplast; the sequence is MDLISVLPSTSKSCVCLHKPLSSSTHKLKPFCRTIRILGMPRPRKSVLMA. Mg(2+) contacts are provided by aspartate 378, aspartate 382, and aspartate 530. The DDXXD motif signature appears at 378–382; that stretch reads DDMYD.

The protein belongs to the terpene synthase family. Tpsd subfamily. It depends on Mg(2+) as a cofactor. Mn(2+) is required as a cofactor.

The protein localises to the plastid. It localises to the chloroplast. It carries out the reaction (2E)-geranyl diphosphate = (1S,5S)-beta-pinene + diphosphate. It catalyses the reaction (2E)-geranyl diphosphate = (1S,5S)-alpha-pinene + diphosphate. It functions in the pathway terpene metabolism; oleoresin biosynthesis. It participates in secondary metabolite biosynthesis; terpenoid biosynthesis. Monoterpene synthase (TPS) involved in the biosynthesis of monoterpene natural products included in conifer oleoresin secretions and volatile emissions; these compounds contribute to biotic and abiotic stress defense against herbivores and pathogens. Catalyzes the conversion of (2E)-geranyl diphosphate (GPP) to (-)-beta-pinene and, to a lower extent, to (-)-alpha-pinene. This Pinus contorta (Shore pine) protein is (-)-beta-pinene synthase 1, chloroplastic.